The chain runs to 403 residues: 8-amino-7-oxononanoate synthase (403 aa).

Arginine 30 is a binding site for substrate. Position 121 to 122 (121 to 122) interacts with pyridoxal 5'-phosphate; sequence GY. A substrate-binding site is contributed by histidine 146. Residues serine 192, histidine 220, and threonine 248 each coordinate pyridoxal 5'-phosphate. Position 251 is an N6-(pyridoxal phosphate)lysine (lysine 251). A substrate-binding site is contributed by threonine 367.

The protein belongs to the class-II pyridoxal-phosphate-dependent aminotransferase family. BioF subfamily. As to quaternary structure, homodimer. The cofactor is pyridoxal 5'-phosphate.

It catalyses the reaction 6-carboxyhexanoyl-[ACP] + L-alanine + H(+) = (8S)-8-amino-7-oxononanoate + holo-[ACP] + CO2. The protein operates within cofactor biosynthesis; biotin biosynthesis. Its function is as follows. Catalyzes the decarboxylative condensation of pimeloyl-[acyl-carrier protein] and L-alanine to produce 8-amino-7-oxononanoate (AON), [acyl-carrier protein], and carbon dioxide. In Burkholderia vietnamiensis (strain G4 / LMG 22486) (Burkholderia cepacia (strain R1808)), this protein is 8-amino-7-oxononanoate synthase.